The sequence spans 481 residues: Mechanosensory protein 2 (481 aa).

Over residues methionine 1 to lysine 22 the composition is skewed to low complexity. Disordered stretches follow at residues methionine 1–arginine 67 and serine 80–lysine 104. Residues leucine 27 to glutamine 38 show a composition bias toward polar residues. Over residues aspartate 86–lysine 104 the composition is skewed to basic and acidic residues. The helical transmembrane segment at glycine 115–isoleucine 135 threads the bilayer. A compositionally biased stretch (gly residues) spans glutamate 403–serine 421. Residues glutamate 403–arginine 481 form a disordered region. Positions serine 433–arginine 447 are enriched in low complexity. Positions alanine 463–glutamine 473 are enriched in polar residues.

The protein belongs to the band 7/mec-2 family. In terms of assembly, component of a non-voltage-gated amiloride-sensitive cation channel complex (also called the degenerin channel complex) composed of at least the mec-2, mec-4, mec-6 and mec-10 subunits; the complex mediates mechanotransduction in touch cells. Interacts with mec-6 and mec-4.

The protein localises to the membrane. Subunit of an amiloride-sensitive cation channel (degenerin channel complex) permeable for sodium, potassium, lithium and N-methylglucamine, and required for mechanosensory transduction (touch sensitivity). Positively regulates the activity of the putative mechanosensory transduction channel. May link the mechanosensory channel and the microtubule cytoskeleton of the touch receptor neurons. Required for the function of a set of six touch receptor neurons. This chain is Mechanosensory protein 2, found in Caenorhabditis elegans.